The following is a 116-amino-acid chain: Nucleoid-associated protein Tfu_0045 (116 aa).

Belongs to the YbaB/EbfC family. As to quaternary structure, homodimer.

The protein resides in the cytoplasm. The protein localises to the nucleoid. Binds to DNA and alters its conformation. May be involved in regulation of gene expression, nucleoid organization and DNA protection. This is Nucleoid-associated protein Tfu_0045 from Thermobifida fusca (strain YX).